The primary structure comprises 490 residues: Chromosomal replication initiator protein DnaA (490 aa).

The tract at residues 1–75 (MAVSSDAEQK…SELWKQEDAD (75 aa)) is domain I, interacts with DnaA modulators. The interval 75 to 145 (DLLKIEIVVR…SEFRHNVLGS (71 aa)) is domain II. Residues 146-368 (PLDPRYTFGS…GAFNQLLFRQ (223 aa)) are domain III, AAA+ region. Positions 192, 194, 195, and 196 each coordinate ATP. Residues 369–490 (SFEPQITIDR…LLRRLINDQA (122 aa)) form a domain IV, binds dsDNA region.

Belongs to the DnaA family. In terms of assembly, oligomerizes as a right-handed, spiral filament on DNA at oriC.

It is found in the cytoplasm. Plays an essential role in the initiation and regulation of chromosomal replication. ATP-DnaA binds to the origin of replication (oriC) to initiate formation of the DNA replication initiation complex once per cell cycle. Binds the DnaA box (a 9 base pair repeat at the origin) and separates the double-stranded (ds)DNA. Forms a right-handed helical filament on oriC DNA; dsDNA binds to the exterior of the filament while single-stranded (ss)DNA is stabiized in the filament's interior. The ATP-DnaA-oriC complex binds and stabilizes one strand of the AT-rich DNA unwinding element (DUE), permitting loading of DNA polymerase. After initiation quickly degrades to an ADP-DnaA complex that is not apt for DNA replication. Binds acidic phospholipids. The sequence is that of Chromosomal replication initiator protein DnaA from Mesorhizobium japonicum (strain LMG 29417 / CECT 9101 / MAFF 303099) (Mesorhizobium loti (strain MAFF 303099)).